Here is a 247-residue protein sequence, read N- to C-terminus: 3(1)-hydroxy-L-isoleucine 4-dioxygenase (247 aa).

Residues His160, Asp162, and His213 each contribute to the Fe cation site.

It belongs to the iron/ascorbate-dependent oxidoreductase family. It depends on L-ascorbate as a cofactor. Fe(2+) is required as a cofactor.

The enzyme catalyses 3(1)-hydroxy-L-isoleucine + 2-oxoglutarate + O2 = (4S)-3(1),4-dihydroxy-L-isoleucine + succinate + CO2. Catalyzes the hydroxylation of L-4'-hydroxyisoleucine (4'-HIL) at the C-4 position to form L-4,4'-dihydroxyisoleucine (4,4'-DIHIL). Together with HilA, catalyzes the two step conversion of L-isoleucine into L-4,4'-dihydroxyisoleucine. In vitro, in the absence of HilA, can also catalyze the oxidation of L-methionine and the C-4-hydroxylation of L-leucine and L-isoleucine. In Pantoea ananatis (strain AJ13355), this protein is 3(1)-hydroxy-L-isoleucine 4-dioxygenase.